A 96-amino-acid chain; its full sequence is Nucleoid-associated protein CT_335 (96 aa).

The protein belongs to the YbaB/EbfC family. Homodimer.

It is found in the cytoplasm. The protein resides in the nucleoid. Binds to DNA and alters its conformation. May be involved in regulation of gene expression, nucleoid organization and DNA protection. The chain is Nucleoid-associated protein CT_335 from Chlamydia trachomatis serovar D (strain ATCC VR-885 / DSM 19411 / UW-3/Cx).